The chain runs to 473 residues: IVTKTSFLSFEISELVKKNVGYITQIIGPVLDVASSPGKMPNIYNSLIIKGQNSAGQELNVTCEVQQLLGNNEVRAVAMSATDGLTRGMGAVDTGAPLSVPVGETTLGRISNVLGEPVDNLGPVQSSTTFPIHRSAPAFIQLDTKLSIFETGIKVVDLSAPYRRGGKIGLFGGAGVGKTVLITELINNIAKAHGGVSVSGGVGERTREGNDPYMEMKESKVINEQNISESKVALVYGQMNEPPGASMRVGSTASTMAEYFRDVNKQDVLPFIDYILRFVQAGSEVSALLGRMPSAVGYQPTLGTEMGSSQERITSTKDGSITSIQAVYVPADDLTDPAPATTSAHLDATTVLSRGLAAKGIYPAVDPLDSTSTMSQPWIVGEEHYETAQGVKQTSQRYKELQDIIAILGLDELSEEDRLTVARARKIERFSSQPSFVAEVFTGSPGKYVSLPETIKGFQMILPGELDNLPEQA.

172–179 (GGAGVGKT) is an ATP binding site.

The protein belongs to the ATPase alpha/beta chains family. As to quaternary structure, F-type ATPases have 2 components, CF(1) - the catalytic core - and CF(0) - the membrane proton channel. CF(1) has five subunits: alpha(3), beta(3), gamma(1), delta(1), epsilon(1). CF(0) has four main subunits: a(1), b(1), b'(1) and c(9-12).

Its subcellular location is the plastid. The protein resides in the chloroplast thylakoid membrane. The catalysed reaction is ATP + H2O + 4 H(+)(in) = ADP + phosphate + 5 H(+)(out). Functionally, produces ATP from ADP in the presence of a proton gradient across the membrane. The catalytic sites are hosted primarily by the beta subunits. The chain is ATP synthase subunit beta, chloroplastic from Pteridium esculentum (Bracken fern).